We begin with the raw amino-acid sequence, 336 residues long: Fructose-1,6-bisphosphatase class 1 (336 aa).

Mg(2+) is bound by residues Glu90, Asp112, Leu114, and Asp115. Substrate contacts are provided by residues Asp115–Ser118, Asn211, and Lys277. Residue Glu283 participates in Mg(2+) binding.

This sequence belongs to the FBPase class 1 family. Homotetramer. Mg(2+) serves as cofactor.

It localises to the cytoplasm. The catalysed reaction is beta-D-fructose 1,6-bisphosphate + H2O = beta-D-fructose 6-phosphate + phosphate. It participates in carbohydrate biosynthesis; gluconeogenesis. In Pseudomonas putida (strain GB-1), this protein is Fructose-1,6-bisphosphatase class 1.